A 142-amino-acid polypeptide reads, in one-letter code: Transcriptional regulator MraZ (142 aa).

2 SpoVT-AbrB domains span residues A5 to E51 and A77 to S120.

This sequence belongs to the MraZ family. As to quaternary structure, forms oligomers.

It is found in the cytoplasm. It localises to the nucleoid. This chain is Transcriptional regulator MraZ, found in Verminephrobacter eiseniae (strain EF01-2).